The chain runs to 291 residues: MANNTLHRYLFEDLSVRGELVQLDDAYQQIISSKEYPKPVQNLLGELLVATTLLTATLKFEGSITLQLQGNGPVSLVVINGDNDQKVRGVARFEGEIADDATLHQLMGKGYLVITISPKDGERYQGVVALEGKDLAECFEGYFERSEQLKTRLWLRLGEFEGKPHAAGMLLQVMPDGTGSSDDFEHLEQLTDTVKNEELFSLEAEDVLYRLYNQDKVQLFEPQNVEFFCGCSRERSGGAIITIERSEVDDIIATEGKVSLHCDYCGTSYDFDSIDVAHLFEEATKGNDTVH.

Disulfide bonds link Cys229–Cys231 and Cys262–Cys265.

The protein belongs to the HSP33 family. Under oxidizing conditions two disulfide bonds are formed involving the reactive cysteines. Under reducing conditions zinc is bound to the reactive cysteines and the protein is inactive.

It localises to the cytoplasm. Redox regulated molecular chaperone. Protects both thermally unfolding and oxidatively damaged proteins from irreversible aggregation. Plays an important role in the bacterial defense system toward oxidative stress. This chain is 33 kDa chaperonin, found in Aliivibrio salmonicida (strain LFI1238) (Vibrio salmonicida (strain LFI1238)).